We begin with the raw amino-acid sequence, 164 residues long: MSSCPVHDCPSWDPERLEPVETGSRGALRLRGGAPGSAAGFRASIWGPAGYPSPVGLGHPASLPRPAYSPRCPEPDARHGWGSGSNAGYRGPDRAGRTPCPAQDREGRSSSPVPPPRLKAMTSQARKQNGGALIDTVDWTREAPDSDPVMSMQKTQKPQTTVGQ.

The tract at residues 1–164 is disordered; the sequence is MSSCPVHDCP…TQKPQTTVGQ (164 aa). Residues 23-40 show a composition bias toward low complexity; the sequence is GSRGALRLRGGAPGSAAG. Over residues 152–164 the composition is skewed to polar residues; it reads MQKTQKPQTTVGQ.

The chain is Putative lung carcinoma-associated protein 10 (LCA10) from Homo sapiens (Human).